The sequence spans 368 residues: 1-deoxy-D-xylulose 5-phosphate reductoisomerase (368 aa).

6 residues coordinate NADPH: Thr9, Gly10, Ser11, Ile12, Asn35, and Asn106. 1-deoxy-D-xylulose 5-phosphate is bound at residue Lys107. Residue Glu108 coordinates NADPH. Residue Asp132 coordinates Mn(2+). Residues Ser133, Glu134, Ser158, and His181 each coordinate 1-deoxy-D-xylulose 5-phosphate. Glu134 lines the Mn(2+) pocket. Residue Gly187 participates in NADPH binding. Residues Ser194, Asn199, Lys200, and Glu203 each coordinate 1-deoxy-D-xylulose 5-phosphate. Glu203 is a binding site for Mn(2+).

Belongs to the DXR family. It depends on Mg(2+) as a cofactor. Requires Mn(2+) as cofactor.

The enzyme catalyses 2-C-methyl-D-erythritol 4-phosphate + NADP(+) = 1-deoxy-D-xylulose 5-phosphate + NADPH + H(+). The protein operates within isoprenoid biosynthesis; isopentenyl diphosphate biosynthesis via DXP pathway; isopentenyl diphosphate from 1-deoxy-D-xylulose 5-phosphate: step 1/6. Catalyzes the NADPH-dependent rearrangement and reduction of 1-deoxy-D-xylulose-5-phosphate (DXP) to 2-C-methyl-D-erythritol 4-phosphate (MEP). This is 1-deoxy-D-xylulose 5-phosphate reductoisomerase from Mycoplasmoides gallisepticum (strain R(low / passage 15 / clone 2)) (Mycoplasma gallisepticum).